The sequence spans 663 residues: uncharacterized protein (663 aa).

The N-terminal stretch at 1-29 is a signal peptide; sequence MLDIGVIGRLKFATAFMAMSLLLVPAAEA.

This sequence belongs to the bacterial solute-binding protein 5 family.

It localises to the periplasm. Functionally, possible binding-protein with either a transport or enzymatic activity. This is an uncharacterized protein from Sinorhizobium fredii (strain NBRC 101917 / NGR234).